A 161-amino-acid polypeptide reads, in one-letter code: Nucleotide-binding protein Aave_1854 (161 aa).

It belongs to the YajQ family.

Functionally, nucleotide-binding protein. This is Nucleotide-binding protein Aave_1854 from Paracidovorax citrulli (strain AAC00-1) (Acidovorax citrulli).